The primary structure comprises 297 residues: MNWISNVVRPKIRDFLARREVPENLWVKCPETGQMVFHKDLEANLYVIPASGYHMRMDAVKRLKATFDDGAYEEVALPEVATDPLKFRDERRYIDRLKDARTKTGYQDAVKVATGMLTELPVTIAVQDFGFMGGSLGMAAGEAVVKGLQTAAEKGTPFIMFAASGGARMQEGILSLMQMPRTTAAIQELRETRKPYIVVLTNPTTGGVTASYAMLGDIQIAEPGALIGFAGPRVIEQTIREKLPDGFQRAEYLHEHGMLDMVVHRHQMRDTLGRLCRMLMKAPALPPKGRLPRPEAA.

One can recognise a CoA carboxyltransferase N-terminal domain in the interval 25–294; that stretch reads LWVKCPETGQ…LPPKGRLPRP (270 aa).

This sequence belongs to the AccD/PCCB family. In terms of assembly, acetyl-CoA carboxylase is a heterohexamer composed of biotin carboxyl carrier protein (AccB), biotin carboxylase (AccC) and two subunits each of ACCase subunit alpha (AccA) and ACCase subunit beta (AccD).

The protein resides in the cytoplasm. The enzyme catalyses N(6)-carboxybiotinyl-L-lysyl-[protein] + acetyl-CoA = N(6)-biotinyl-L-lysyl-[protein] + malonyl-CoA. The protein operates within lipid metabolism; malonyl-CoA biosynthesis; malonyl-CoA from acetyl-CoA: step 1/1. In terms of biological role, component of the acetyl coenzyme A carboxylase (ACC) complex. Biotin carboxylase (BC) catalyzes the carboxylation of biotin on its carrier protein (BCCP) and then the CO(2) group is transferred by the transcarboxylase to acetyl-CoA to form malonyl-CoA. The polypeptide is Acetyl-coenzyme A carboxylase carboxyl transferase subunit beta (Xanthobacter autotrophicus (strain ATCC BAA-1158 / Py2)).